A 341-amino-acid chain; its full sequence is Putative ubiquitin-like-specific protease 1B (341 aa).

Catalysis depends on residues histidine 231, aspartate 248, and cysteine 300.

This sequence belongs to the peptidase C48 family.

Functionally, protease that catalyzes two essential functions in the SUMO pathway: processing of full-length SUMOs to their mature forms and deconjugation of SUMO from targeted proteins. The sequence is that of Putative ubiquitin-like-specific protease 1B (ULP1B) from Arabidopsis thaliana (Mouse-ear cress).